Consider the following 234-residue polypeptide: uncharacterized protein (234 aa).

A compositionally biased stretch (low complexity) spans 1 to 12 (MGSSSSSSLNNS). The tract at residues 1–184 (MGSSSSSSLN…TPYLSGANSR (184 aa)) is disordered. Composition is skewed to polar residues over residues 21-40 (TPESQMTVNDNKNDNVSILS) and 52-64 (KSTSIPANNNLTP). The span at 66 to 77 (KSRWSFSSSKKS) shows a compositional bias: low complexity. Residues 105 to 120 (GDFTPSLGNTPKSSFS) show a composition bias toward polar residues. The span at 152 to 167 (LGELFRDSIREEREES) shows a compositional bias: basic and acidic residues.

As to quaternary structure, interacts with RLK902. As to expression, expressed in stems, rosette leaves and roots and weakly in inflorescences.

This is an uncharacterized protein from Arabidopsis thaliana (Mouse-ear cress).